Reading from the N-terminus, the 510-residue chain is D-alanine--D-alanyl carrier protein ligase (510 aa).

157–158 (TS) is an ATP binding site. Asp202 contacts D-alanine. 297–302 (NTYGPT) provides a ligand contact to ATP. Val306 is a binding site for D-alanine. ATP is bound by residues Asp389 and Lys498. D-alanine is bound at residue Lys498.

It belongs to the ATP-dependent AMP-binding enzyme family. DltA subfamily.

It localises to the cytoplasm. It catalyses the reaction holo-[D-alanyl-carrier protein] + D-alanine + ATP = D-alanyl-[D-alanyl-carrier protein] + AMP + diphosphate. It participates in cell wall biogenesis; lipoteichoic acid biosynthesis. In terms of biological role, catalyzes the first step in the D-alanylation of lipoteichoic acid (LTA), the activation of D-alanine and its transfer onto the D-alanyl carrier protein (Dcp) DltC. In an ATP-dependent two-step reaction, forms a high energy D-alanyl-AMP intermediate, followed by transfer of the D-alanyl residue as a thiol ester to the phosphopantheinyl prosthetic group of the Dcp. D-alanylation of LTA plays an important role in modulating the properties of the cell wall in Gram-positive bacteria, influencing the net charge of the cell wall. This chain is D-alanine--D-alanyl carrier protein ligase, found in Listeria welshimeri serovar 6b (strain ATCC 35897 / DSM 20650 / CCUG 15529 / CIP 8149 / NCTC 11857 / SLCC 5334 / V8).